Consider the following 145-residue polypeptide: uncharacterized protein (145 aa).

This is an uncharacterized protein from Saccharomyces cerevisiae (strain ATCC 204508 / S288c) (Baker's yeast).